A 589-amino-acid polypeptide reads, in one-letter code: METDLNDYTVIKEGEAEILMHKKNQVFFNKAQVNNRDMSIAVLREFLSKRKQEHEAKSSKRTRPASKVIEKDASEASKEETPSENGMNNGDHEVASEDGPSSVSKDPAKTTERFAPREPKPPKVLEALSASGLRALRYAREIEGIGQVVALDNDLASVEACQRNIKFNGSVAISKVESHHTDARVHMLTHPKEFDVVDLDPYGSPSIFLDSAIQSVTDGGLLMCTATDMAVLCGGNGEVCYSKYGSYPLRAKYCHEMALRILLASIESHANRYKRYIVPVLSVQMDFYVRVFVRVYTSASAMKNTPLKLSYVYQCIGCDSFHLQPVGRSLPKNNSVRYLPAIGPVVKQDCNHCGKKYNMGGPIWSAPMHDPEWVTSILNSVKSMKDRYPAYDRISAVLTTVSEELLDVPLFLSLHNLCATLKCISPSAAMFRSAVINANYRISGTHVNPLGMKTDAPMEVIWDIMRCWVKNHPIKAQSPEQPGSVILSKEPSHEVDFSRHIGSLSKAQAKKVARFLPNPEKHWGPKLRAGRQITSKHVSLIGHEAVNGHLSQHHEELKEEDEEAEPEDNVQDKVDPKRQKTATDNITST.

Residues 9-465 (TVIKEGEAEI…APMEVIWDIM (457 aa)) form the Trm1 methyltransferase domain. S-adenosyl-L-methionine is bound at residue R36. Residues 51-122 (KQEHEAKSSK…RFAPREPKPP (72 aa)) form a disordered region. Basic and acidic residues-rich tracts occupy residues 68–81 (VIEK…KEET) and 106–122 (DPAK…PKPP). Residues R134, D152, and V185 each coordinate S-adenosyl-L-methionine. C315, C318, C350, and C353 together coordinate Zn(2+). The disordered stretch occupies residues 550-589 (LSQHHEELKEEDEEAEPEDNVQDKVDPKRQKTATDNITST). The segment covering 558 to 569 (KEEDEEAEPEDN) has biased composition (acidic residues).

This sequence belongs to the class I-like SAM-binding methyltransferase superfamily. Trm1 family.

It carries out the reaction guanosine(26) in tRNA + 2 S-adenosyl-L-methionine = N(2)-dimethylguanosine(26) in tRNA + 2 S-adenosyl-L-homocysteine + 2 H(+). Dimethylates a single guanine residue at position 26 of most tRNAs using S-adenosyl-L-methionine as donor of the methyl groups. This Arabidopsis thaliana (Mouse-ear cress) protein is tRNA (guanine(26)-N(2))-dimethyltransferase 2.